A 599-amino-acid polypeptide reads, in one-letter code: Sulfite reductase [NADPH] flavoprotein alpha-component (599 aa).

Positions 64-202 (VTLISASQTG…AASEWRARVV (139 aa)) constitute a Flavodoxin-like domain. Residues 70–75 (SQTGNA), 117–120 (STQG), and 153–162 (LGDTSYEFFC) contribute to the FMN site. One can recognise an FAD-binding FR-type domain in the interval 234-448 (DAPLIATLSV…IEHNDNFRLP (215 aa)). Residues T322, A356, 386–389 (RLYS), 404–406 (TVG), Y410, and 419–422 (GGAS) each bind FAD. NADP(+) contacts are provided by residues 519-520 (SR), 525-529 (KIYVQ), and D561. Y599 is an FAD binding site.

The protein belongs to the NADPH-dependent sulphite reductase flavoprotein subunit CysJ family. In the N-terminal section; belongs to the flavodoxin family. It in the C-terminal section; belongs to the flavoprotein pyridine nucleotide cytochrome reductase family. In terms of assembly, alpha(8)-beta(8). The alpha component is a flavoprotein, the beta component is a hemoprotein. Requires FAD as cofactor. It depends on FMN as a cofactor.

The enzyme catalyses hydrogen sulfide + 3 NADP(+) + 3 H2O = sulfite + 3 NADPH + 4 H(+). It participates in sulfur metabolism; hydrogen sulfide biosynthesis; hydrogen sulfide from sulfite (NADPH route): step 1/1. Component of the sulfite reductase complex that catalyzes the 6-electron reduction of sulfite to sulfide. This is one of several activities required for the biosynthesis of L-cysteine from sulfate. The flavoprotein component catalyzes the electron flow from NADPH -&gt; FAD -&gt; FMN to the hemoprotein component. This chain is Sulfite reductase [NADPH] flavoprotein alpha-component, found in Salmonella typhimurium (strain LT2 / SGSC1412 / ATCC 700720).